Here is a 291-residue protein sequence, read N- to C-terminus: Phosphate import ATP-binding protein PstB (291 aa).

Residues 44–286 (VKAREVNVFY…PEEKRTQDYI (243 aa)) form the ABC transporter domain. 76–83 (GPSGCGKS) is an ATP binding site.

It belongs to the ABC transporter superfamily. Phosphate importer (TC 3.A.1.7) family. The complex is composed of two ATP-binding proteins (PstB), two transmembrane proteins (PstC and PstA) and a solute-binding protein (PstS).

The protein resides in the cell inner membrane. It carries out the reaction phosphate(out) + ATP + H2O = ADP + 2 phosphate(in) + H(+). Its function is as follows. Part of the ABC transporter complex PstSACB involved in phosphate import. Responsible for energy coupling to the transport system. The protein is Phosphate import ATP-binding protein PstB of Chelativorans sp. (strain BNC1).